A 216-amino-acid polypeptide reads, in one-letter code: Probable nicotinate-nucleotide adenylyltransferase (216 aa).

Belongs to the NadD family.

The catalysed reaction is nicotinate beta-D-ribonucleotide + ATP + H(+) = deamido-NAD(+) + diphosphate. The protein operates within cofactor biosynthesis; NAD(+) biosynthesis; deamido-NAD(+) from nicotinate D-ribonucleotide: step 1/1. Its function is as follows. Catalyzes the reversible adenylation of nicotinate mononucleotide (NaMN) to nicotinic acid adenine dinucleotide (NaAD). This is Probable nicotinate-nucleotide adenylyltransferase from Shewanella baltica (strain OS195).